We begin with the raw amino-acid sequence, 622 residues long: Mitochondrial distribution and morphology protein 34 (622 aa).

An SMP-LTD domain is found at 1–204; that stretch reads MSFKVNWNSL…LPTLIHQLSL (204 aa). 3 disordered regions span residues 364–393, 442–468, and 572–592; these read YSNK…DNTV, LETM…RAYQ, and LDGG…NFRP. The segment covering 372–385 has biased composition (basic residues); that stretch reads KPKRRRIKVHKKSK. The segment covering 446–455 has biased composition (low complexity); the sequence is STGSSSSASS. Residues 577-587 show a composition bias toward polar residues; that stretch reads NSANTNNSSGG.

The protein belongs to the MDM34 family. Component of the ER-mitochondria encounter structure (ERMES) or MDM complex, composed of MMM1, MDM10, MDM12 and MDM34.

The protein localises to the mitochondrion outer membrane. In terms of biological role, component of the ERMES/MDM complex, which serves as a molecular tether to connect the endoplasmic reticulum (ER) and mitochondria. Components of this complex are involved in the control of mitochondrial shape and protein biogenesis, and function in nonvesicular lipid trafficking between the ER and mitochondria. MDM34 is required for the interaction of the ER-resident membrane protein MMM1 and the outer mitochondrial membrane-resident beta-barrel protein MDM10. The chain is Mitochondrial distribution and morphology protein 34 from Candida albicans (strain WO-1) (Yeast).